Reading from the N-terminus, the 1603-residue chain is MITNTPLQFSVLWASILSWINISSPLILFGLYYGFLTTLPIGPSQILSIRAFLLEGNLSGTVAVSGLILGQLIIFLSIYYSPLYTLLLKPHTVTLLVLPYLLFYWYRIKDLLDYQSLRPINSIKDSRIYKIFFDSFIFQLLNPVLLPSPILVRLINLFFFRYSNNFLFVLSCFFGWLSGHLFFFNCIKFLLIRIEKDSPILYLLVKRIIYRTFSIFVLACILLYLGRAPVPFFTKKLNDELQFNKSGFLWLNKPWPTFFFDYYRWNRPFRYIENNRFTNKSPVKKSVSQYFFNISLSDGKQKISFTALPSLSIFEKDLKTYLNISTNNNNLYKNWLDTKNERKDNLLYELENRIQALDNGLVIKEVIEKKTSLSNNEGINLTKINDPFLNGSFRGKAIITKSPWLLKENSYKLKKNRKIVYLKENKLKIWISNRWRELRRKNLPLPWEPLNKNARRSLVLLIQGSKNKKLKRKLQQIHFSEEQALINLTKQTNISDLTEKLENKHLLNKKFTKISHFNWELVLNLSPRQRAVYFKELEYEKWQILVRSWKNLLSVNSINSTQLNKFILLLKKLFTFHKKFALQEISKELPRWTSKLRNDKFDVIAIGITDIRQRKVKNLGYLIKGKEKRRKIVRRFSQQSDFRRRLVKGSMRSRRRKTLIWKILQLKTHSPFFLRINEKHIPFQISLNKLNLIDVKHIFKNPVEKQKKIALFPTKNNVTLKKKTKADRLAIANRWDFPLAQWGRSWLLLIQSYFRKYLILPILIISKNIIRLLLFQTPEWSEDWNDWNKEMYIKCTYDGIEVSEKALPEQWLRDGLQIKIIYPFILKPWHNLQLETNIKKNLNDLMNTNDNFSTNIKKKKIKYSYLTAWGFETNAPFGDIKKKPSFWKPIRKELKKKWKKNILLNFNKIYSKFSLVKKKITNNSNNSINNESKDLVKENIKINNNLKFNLTNKNYNKKLPEQISSKFSQTILSENQIKNKYKISTNIQKLENLKFLKKSKIEKITKKINFDKIEFFNKLNNDNKVYFTNKQKKIENKQKLIKYYKKNISLVNKWSYFFKLNFNKINKNFFQFSINIIRFNINLISKIQQNLILIKNRKIWNPLKVSQINQKKDKINYKYSNDFGEKIQSLKINVNQENILLMSQAYLFHKIWQIEKTNNKCDFKYLLKNWTSNSVIKKKINRNLKKMDLKFLKEQNWKNWLQNFNKYNLSSQVWYKLAPQKWRNQINYQWKGKEQNNLKFSEKQIKALTLSKEKTFFYKLFIDSLLEQNRKISKRYKYNYLCYSYLDFKKQPNFLESTKNKKESLFNNEILQISKNQVNNNYKQDISLKSNLILWLIPTLTEKKYINKIETINRNNISLLKEKNKKNSRNKKTLRERERHETIRQWKWKSKNIEKRFKELGDMASLMTFMQDQENSVSLSAKMRENLDLFRLLFCRDVGVNKLTINSEHRLPRVLDDQILMYKVISLFLKSKNRFKKNVNITNFNLSTSRIEFFQNNNQNNNFNLINLEDIMLLKHRKELKVLNLLNLKQNTNQILNFNKVILKENKRKRIELNKIQNKNQNLTIKHFLWPTFRLEDLACVNRFWFNTSNGSRFTMLRIRMYT.

The next 6 helical transmembrane spans lie at 11–31, 58–78, 86–106, 131–151, 167–187, and 213–233; these read VLWA…LFGL, LSGT…FLSI, LLLK…FYWY, IFFD…SPIL, LFVL…FNCI, and FSIF…VPFF.

This sequence belongs to the TIC214 family. As to quaternary structure, part of the Tic complex.

Its subcellular location is the plastid. It localises to the chloroplast inner membrane. In terms of biological role, involved in protein precursor import into chloroplasts. May be part of an intermediate translocation complex acting as a protein-conducting channel at the inner envelope. This chain is Protein TIC 214, found in Physcomitrium patens (Spreading-leaved earth moss).